Here is an 895-residue protein sequence, read N- to C-terminus: Pyruvate dehydrogenase E1 component (895 aa).

The segment at 1–20 is disordered; that stretch reads MSAVPEQILGASSANDADPQ.

Homodimer. Part of the PDH complex, consisting of multiple copies of pyruvate dehydrogenase (E1), dihydrolipoamide acetyltransferase (E2) and lipoamide dehydrogenase (E3). Thiamine diphosphate is required as a cofactor.

The catalysed reaction is N(6)-[(R)-lipoyl]-L-lysyl-[protein] + pyruvate + H(+) = N(6)-[(R)-S(8)-acetyldihydrolipoyl]-L-lysyl-[protein] + CO2. Functionally, component of the pyruvate dehydrogenase (PDH) complex, that catalyzes the overall conversion of pyruvate to acetyl-CoA and CO(2). The sequence is that of Pyruvate dehydrogenase E1 component (pdhA) from Cupriavidus necator (strain ATCC 17699 / DSM 428 / KCTC 22496 / NCIMB 10442 / H16 / Stanier 337) (Ralstonia eutropha).